We begin with the raw amino-acid sequence, 379 residues long: F-box protein At5g18160 (379 aa).

A disordered region spans residues M1 to N26. Positions T11 to N26 are enriched in polar residues. Residues I28–R74 enclose the F-box domain.

The sequence is that of F-box protein At5g18160 from Arabidopsis thaliana (Mouse-ear cress).